Reading from the N-terminus, the 129-residue chain is Mediator of RNA polymerase II transcription subunit 31-B (129 aa).

Belongs to the Mediator complex subunit 31 family. In terms of assembly, component of the Mediator complex.

The protein localises to the nucleus. Component of the Mediator complex, a coactivator involved in the regulated transcription of nearly all RNA polymerase II-dependent genes. Mediator functions as a bridge to convey information from gene-specific regulatory proteins to the basal RNA polymerase II transcription machinery. Mediator is recruited to promoters by direct interactions with regulatory proteins and serves as a scaffold for the assembly of a functional preinitiation complex with RNA polymerase II and the general transcription factors. The protein is Mediator of RNA polymerase II transcription subunit 31-B (med31-b) of Xenopus laevis (African clawed frog).